Here is a 199-residue protein sequence, read N- to C-terminus: Acireductone dioxygenase 2 (199 aa).

Residues His98, His100, Glu104, and His143 each coordinate Fe(2+). Ni(2+) contacts are provided by His98, His100, Glu104, and His143.

Belongs to the acireductone dioxygenase (ARD) family. Fe(2+) is required as a cofactor. Requires Ni(2+) as cofactor.

The protein resides in the cytoplasm. The protein localises to the nucleus. It catalyses the reaction 1,2-dihydroxy-5-(methylsulfanyl)pent-1-en-3-one + O2 = 4-methylsulfanyl-2-oxobutanoate + formate + 2 H(+). The catalysed reaction is 1,2-dihydroxy-5-(methylsulfanyl)pent-1-en-3-one + O2 = 3-(methylsulfanyl)propanoate + CO + formate + 2 H(+). It participates in amino-acid biosynthesis; L-methionine biosynthesis via salvage pathway; L-methionine from S-methyl-5-thio-alpha-D-ribose 1-phosphate: step 5/6. Its function is as follows. Catalyzes 2 different reactions between oxygen and the acireductone 1,2-dihydroxy-3-keto-5-methylthiopentene (DHK-MTPene) depending upon the metal bound in the active site. Fe-containing acireductone dioxygenase (Fe-ARD) produces formate and 2-keto-4-methylthiobutyrate (KMTB), the alpha-ketoacid precursor of methionine in the methionine recycle pathway. Ni-containing acireductone dioxygenase (Ni-ARD) produces methylthiopropionate, carbon monoxide and formate, and does not lie on the methionine recycle pathway. This is Acireductone dioxygenase 2 from Vitis vinifera (Grape).